A 487-amino-acid polypeptide reads, in one-letter code: Glutamyl-tRNA(Gln) amidotransferase subunit A (487 aa).

Catalysis depends on charge relay system residues K79 and S158. S182 (acyl-ester intermediate) is an active-site residue.

It belongs to the amidase family. GatA subfamily. In terms of assembly, heterotrimer of A, B and C subunits.

The enzyme catalyses L-glutamyl-tRNA(Gln) + L-glutamine + ATP + H2O = L-glutaminyl-tRNA(Gln) + L-glutamate + ADP + phosphate + H(+). In terms of biological role, allows the formation of correctly charged Gln-tRNA(Gln) through the transamidation of misacylated Glu-tRNA(Gln) in organisms which lack glutaminyl-tRNA synthetase. The reaction takes place in the presence of glutamine and ATP through an activated gamma-phospho-Glu-tRNA(Gln). In Ehrlichia ruminantium (strain Gardel), this protein is Glutamyl-tRNA(Gln) amidotransferase subunit A.